Here is a 224-residue protein sequence, read N- to C-terminus: Cytidylate kinase (224 aa).

9 to 17 (GPSGSGKGT) provides a ligand contact to ATP.

The protein belongs to the cytidylate kinase family. Type 1 subfamily.

The protein resides in the cytoplasm. The catalysed reaction is CMP + ATP = CDP + ADP. It carries out the reaction dCMP + ATP = dCDP + ADP. The polypeptide is Cytidylate kinase (Saccharophagus degradans (strain 2-40 / ATCC 43961 / DSM 17024)).